The chain runs to 249 residues: Probable transcriptional regulatory protein IL1088 (249 aa).

Belongs to the TACO1 family.

It is found in the cytoplasm. This is Probable transcriptional regulatory protein IL1088 from Idiomarina loihiensis (strain ATCC BAA-735 / DSM 15497 / L2-TR).